The sequence spans 1091 residues: Methionine S-methyltransferase (1091 aa).

The protein belongs to the class I-like SAM-binding methyltransferase superfamily. Homotetramer.

It localises to the cytoplasm. The enzyme catalyses L-methionine + S-adenosyl-L-methionine = S-methyl-L-methionine + S-adenosyl-L-homocysteine. In terms of biological role, catalyzes the S-methylmethionine (SMM) biosynthesis from adenosyl-L-homocysteine (AdoMet) and methionine. SMM biosynthesis (by MMT1) and degradation (by HMT-1, HMT-2 and HMT-3) constitute the SMM cycle in plants, which is probably required to achieve short term control of AdoMet level. Also able to catalyze the selenium-methylmethionine (SeMM) from AdoMet and selenium-methionine (SeMet). May play a role in phoem sulfur transport; such function is however not essential. The chain is Methionine S-methyltransferase (MMT1) from Zea mays (Maize).